The following is a 494-amino-acid chain: Ubiquinol-cytochrome-c reductase complex core protein I, mitochondrial (494 aa).

Histidine 70 is a binding site for Zn(2+). Catalysis depends on glutamate 73, which acts as the Proton acceptor. Histidine 74 and glutamate 150 together coordinate Zn(2+).

Belongs to the peptidase M16 family. UQCRC1/QCR1 subfamily. As to quaternary structure, component of the ubiquinol-cytochrome c oxidoreductase (cytochrome b-c1 complex, complex III, CIII), a multisubunit enzyme composed of 10 subunits. The complex is composed of 3 respiratory subunits cytochrome b, cytochrome c1 and Rieske protein, 2 core protein subunits, and additional low-molecular weight protein subunits. The complex exists as an obligatory dimer and forms supercomplexes (SCs) in the inner mitochondrial membrane with cytochrome c oxidase (complex IV, CIV). It depends on Zn(2+) as a cofactor. The N-terminus is blocked.

The protein localises to the mitochondrion inner membrane. Component of the ubiquinol-cytochrome c oxidoreductase, a multisubunit transmembrane complex that is part of the mitochondrial electron transport chain which drives oxidative phosphorylation. The respiratory chain contains 3 multisubunit complexes succinate dehydrogenase (complex II, CII), ubiquinol-cytochrome c oxidoreductase (cytochrome b-c1 complex, complex III, CIII) and cytochrome c oxidase (complex IV, CIV), that cooperate to transfer electrons derived from NADH and succinate to molecular oxygen, creating an electrochemical gradient over the inner membrane that drives transmembrane transport and the ATP synthase. The cytochrome b-c1 complex catalyzes electron transfer from ubiquinol to cytochrome c, linking this redox reaction to translocation of protons across the mitochondrial inner membrane, with protons being carried across the membrane as hydrogens on the quinol. In the process called Q cycle, 2 protons are consumed from the matrix, 4 protons are released into the intermembrane space and 2 electrons are passed to cytochrome c. The chain is Ubiquinol-cytochrome-c reductase complex core protein I, mitochondrial from Euglena gracilis.